We begin with the raw amino-acid sequence, 500 residues long: NAD(P)H-quinone oxidoreductase chain 4, chloroplastic (500 aa).

14 consecutive transmembrane segments (helical) span residues 4–24 (FPWLTIIVVFPISAGSLMLFL), 35–55 (YTICICILELLITTYAFCYNF), 87–107 (IGTILLTGFITTLATLAAFPV), 113–130 (LFHFLMLAMYSGQIGSFS), 134–154 (LLLFFIMWELELIPVYLLLSM), 167–187 (FILYTAGSSIFLLIGVLGISL), 211–231 (ILFYIGFVIALTVKSPIIPLH), 242–262 (HYSTCMLLAGILLKMGAYGLV), 272–292 (AHSLFSPWLMAVGTIQIIYAA), 305–325 (IAYSSVSHMGFIIIGIGSITD), 330–350 (GAILQIISHGFIGAALFFLAG), 386–406 (LALPGMSGFVAELIVFFGIIT), 416–436 (ILIIFVMAIGIILTPIYLLSM), and 462–482 (LFLSISILLPIIGIGIYPDFV).

Belongs to the complex I subunit 4 family.

The protein resides in the plastid. Its subcellular location is the chloroplast thylakoid membrane. The catalysed reaction is a plastoquinone + NADH + (n+1) H(+)(in) = a plastoquinol + NAD(+) + n H(+)(out). It catalyses the reaction a plastoquinone + NADPH + (n+1) H(+)(in) = a plastoquinol + NADP(+) + n H(+)(out). The polypeptide is NAD(P)H-quinone oxidoreductase chain 4, chloroplastic (Draba nemorosa (Woodland whitlowgrass)).